The following is a 225-amino-acid chain: Glutathione s-transferase kappa 2 (225 aa).

Glutathione contacts are provided by residues Ser15 to Tyr17, Asn52, and Ser200 to Asp201.

It belongs to the GST superfamily. Kappa family. Expressed in the pharynx, body wall muscles and epidermis. Weaker expression is seen in the intestine.

Its subcellular location is the mitochondrion. It catalyses the reaction RX + glutathione = an S-substituted glutathione + a halide anion + H(+). Functionally, has roles in respiratory and lipid metabolism. The sequence is that of Glutathione s-transferase kappa 2 (gstk-2) from Caenorhabditis elegans.